The sequence spans 187 residues: uncharacterized protein (187 aa).

The helical transmembrane segment at 3–23 (AIIIFLILFIVGVLIGVGVYY) threads the bilayer.

It localises to the membrane. This is an uncharacterized protein from Methanocaldococcus jannaschii (strain ATCC 43067 / DSM 2661 / JAL-1 / JCM 10045 / NBRC 100440) (Methanococcus jannaschii).